The following is a 435-amino-acid chain: Proline and serine-rich protein 2 (435 aa).

Over residues 1–10 the composition is skewed to basic and acidic residues; sequence MPVTHRKSDA. The interval 1–22 is disordered; the sequence is MPVTHRKSDASDMNSDTSPSCR. Serine 8 is modified (phosphoserine). Residues 11–20 are compositionally biased toward polar residues; that stretch reads SDMNSDTSPS. A Phosphoserine modification is found at serine 43. A Phosphothreonine modification is found at threonine 45. Composition is skewed to low complexity over residues 92 to 102 and 113 to 126; these read PSLEESTSSPS and PAPGAGEAEGLPEG. 2 disordered regions span residues 92 to 276 and 295 to 420; these read PSLE…RAAV and AFPA…SEEA. A Phosphothreonine modification is found at threonine 146. Positions 146-169 are enriched in pro residues; sequence TPPPPDPPAPETLLAPPPLPSTPD. Serine 166 is subject to Phosphoserine. Phosphothreonine is present on threonine 167. A phosphoserine mark is found at serine 179, serine 212, and serine 215. Positions 228 to 237 are enriched in low complexity; it reads PAARGPRSGD. The residue at position 252 (arginine 252) is an Asymmetric dimethylarginine; alternate. Arginine 252 carries the omega-N-methylarginine; alternate modification. The segment covering 302–311 has biased composition (gly residues); the sequence is AGEGAPGGGS. Serine 312 bears the Phosphoserine mark. Residue arginine 320 is modified to Omega-N-methylarginine; alternate. Position 320 is a dimethylated arginine; alternate (arginine 320). Arginine 378 is subject to Omega-N-methylarginine. A Phosphoserine modification is found at serine 400. Position 414 is an omega-N-methylarginine (arginine 414).

The sequence is that of Proline and serine-rich protein 2 (PROSER2) from Homo sapiens (Human).